Here is a 146-residue protein sequence, read N- to C-terminus: Protein MucA (146 aa).

Residues Ser-62 and Lys-99 each act as for autocatalytic cleavage activity in the active site.

It belongs to the peptidase S24 family.

Functionally, involved in UV protection and mutation. This is Protein MucA (mucA) from Escherichia coli.